Here is a 38-residue protein sequence, read N- to C-terminus: Photosystem II reaction center protein X 2 (38 aa).

The chain crosses the membrane as a helical span at residues 8-28 (FLWSLVYGAVVLGLLFGAIVF).

The protein belongs to the PsbX family. Type 1 subfamily. As to quaternary structure, PSII is composed of 1 copy each of membrane proteins PsbA, PsbB, PsbC, PsbD, PsbE, PsbF, PsbH, PsbI, PsbJ, PsbK, PsbL, PsbM, PsbT, PsbX, PsbY, PsbZ, Psb30/Ycf12, peripheral proteins PsbO, CyanoQ (PsbQ), PsbU, PsbV and a large number of cofactors. It forms dimeric complexes.

Its subcellular location is the cellular thylakoid membrane. In terms of biological role, involved in the binding and/or turnover of quinones at the Q(B) site of photosystem II (PSII). PSII is a light-driven water plastoquinone oxidoreductase, using light energy to abstract electrons from H(2)O, generating a proton gradient subsequently used for ATP formation. The chain is Photosystem II reaction center protein X 2 from Synechococcus sp. (strain JA-3-3Ab) (Cyanobacteria bacterium Yellowstone A-Prime).